The following is a 139-amino-acid chain: Angiogenin (139 aa).

Positions 1–21 are cleaved as a signal peptide; it reads MAMSSLWWTAILLLALTVSMC. Catalysis depends on His34, which acts as the Proton acceptor. Disulfide bonds link Cys49/Cys102, Cys64/Cys111, and Cys82/Cys126. Residues Cys102 and Val122 each contribute to the tRNA site. His133 acts as the Proton donor in catalysis.

The protein belongs to the pancreatic ribonuclease family. In terms of assembly, homodimer. Interacts with RNH1; inhibiting ANG ribonuclease activity.

It localises to the secreted. It is found in the nucleus. The protein resides in the nucleolus. Its subcellular location is the cytoplasm. The protein localises to the stress granule. Its function is as follows. Secreted ribonuclease that can either promote or restrict cell proliferation of target cells, depending on the context. Endocytosed in target cells via its receptor PLXNB2 and translocates to the cytoplasm or nucleus. Under stress conditions, localizes to the cytoplasm and promotes the assembly of stress granules (SGs): specifically cleaves a subset of tRNAs within anticodon loops to produce tRNA-derived stress-induced fragments (tiRNAs), resulting in translation repression and inhibition of cell proliferation. tiRNas also prevent formation of apoptosome, thereby promoting cell survival. Preferentially cleaves RNAs between a pyrimidine and an adenosine residue, suggesting that it cleaves the anticodon loop of tRNA(Ala) (32-UUAGCAU-38) after positions 33 and 36. Cleaves a subset of tRNAs, including tRNA(Ala), tRNA(Glu), tRNA(Gly), tRNA(Lys), tRNA(Val), tRNA(His), tRNA(Asp) and tRNA(Sec). Under growth conditions and in differentiated cells, translocates to the nucleus and stimulates ribosomal RNA (rRNA) transcription, including that containing the initiation site sequences of 45S rRNA, thereby promoting cell growth and proliferation. Angiogenin induces vascularization of normal and malignant tissues via its ability to promote rRNA transcription. This is Angiogenin (ANG) from Gallus gallus (Chicken).